A 156-amino-acid chain; its full sequence is Small ribosomal subunit protein uS7 (156 aa).

This sequence belongs to the universal ribosomal protein uS7 family. As to quaternary structure, part of the 30S ribosomal subunit. Contacts proteins S9 and S11.

One of the primary rRNA binding proteins, it binds directly to 16S rRNA where it nucleates assembly of the head domain of the 30S subunit. Is located at the subunit interface close to the decoding center, probably blocks exit of the E-site tRNA. This is Small ribosomal subunit protein uS7 from Campylobacter hominis (strain ATCC BAA-381 / DSM 21671 / CCUG 45161 / LMG 19568 / NCTC 13146 / CH001A).